The primary structure comprises 602 residues: Solute carrier organic anion transporter family member 1C1 (602 aa).

Residues M1–K43 lie on the Cytoplasmic side of the membrane. The chain crosses the membrane as a helical span at residues V44–L63. Residues K64–G82 are Extracellular-facing. A helical transmembrane segment spans residues V83 to G103. Topologically, residues A104–P109 are cytoplasmic. A helical membrane pass occupies residues K110–E134. Residues Q135–E139 are Extracellular-facing. A helical transmembrane segment spans residues I140–L156. The Cytoplasmic portion of the chain corresponds to E157–Y238. The segment at P190–Q216 is disordered. Basic and acidic residues predominate over residues Q193–D214. The chain crosses the membrane as a helical span at residues L239–F260. Residues G261–R280 lie on the Extracellular side of the membrane. Residues A281–M304 form a helical membrane-spanning segment. The Cytoplasmic segment spans residues K305–R308. Residues I309–L332 form a helical membrane-spanning segment. The Extracellular segment spans residues F333–F444. A Kazal-like domain is found at R360–G415. 3 cysteine pairs are disulfide-bonded: C366–C396, C372–C392, and C381–C413. Residues N400, N410, and N423 are each glycosylated (N-linked (GlcNAc...) asparagine). The helical transmembrane segment at L445 to L467 threads the bilayer. At R468 to S476 the chain is on the cytoplasmic side. The helical transmembrane segment at F477–I502 threads the bilayer. The Extracellular portion of the chain corresponds to D503–T536. Residues V537 to L554 form a helical membrane-spanning segment. At K555–L602 the chain is on the cytoplasmic side.

It belongs to the organo anion transporter (TC 2.A.60) family.

The protein resides in the cell membrane. It catalyses the reaction 3,3',5'-triiodo-L-thyronine(out) = 3,3',5'-triiodo-L-thyronine(in). It carries out the reaction L-thyroxine(out) = L-thyroxine(in). The catalysed reaction is L-thyroxine sulfate(out) = L-thyroxine sulfate(in). Its function is as follows. Mediates the Na(+)-independent high affinity transport of organic anions such as the thyroid hormones L-thyroxine (T4), L-thyroxine sulfate (T4S), and 3,3',5'-triiodo-L-thyronine (reverse T3, rT3) at the plasma membrane. Regulates T4 levels in different brain regions by transporting T4, and also by serving as an export pump for T4S, which is a source of T4 after hydrolysis by local sulfatases. Increases the access of these substrates to the intracellular sites where they are metabolized by the deiodinases. Other potential substrates, such as triiodothyronine (T3), 17-beta-glucuronosyl estradiol (17beta-estradiol 17-O-(beta-D-glucuronate)), estrone-3-sulfate (E1S) and sulfobromophthalein (BSP) are transported with much lower efficiency. Transports T4 and E1S in a pH-insensitive manner. Facilitates the transport of thyroid hormones across the blood-brain barrier and into glia and neuronal cells in the brain. The sequence is that of Solute carrier organic anion transporter family member 1C1 (SLCO1C1) from Macaca fascicularis (Crab-eating macaque).